A 230-amino-acid polypeptide reads, in one-letter code: MYENTNSEENNNNIQSQNMDIQKFKKYIRTEKKADERPKVIVMGRSNVGKSTFVKLVTGKNVRVGKKPGVTLKITEYDMGTYILVDLPGFGFMEGIEKKAQEKIKDEIIHYVEDNKDAIAASIHILDAKSFIDIVERWGNKGEVPIDLEMADFLEELELNPIFVVNKMDKIKNSEWDNHLDKVSETLGFLPPWRQWLDNFVPAIMRDNYGIDGIKHRINKRINIFKKSKK.

One can recognise an EngB-type G domain in the interval 36-224 (ERPKVIVMGR…KHRINKRINI (189 aa)). GTP contacts are provided by residues 44–51 (GRSNVGKS), 69–73 (GVTLK), 86–89 (DLPG), 166–169 (NKMD), and 201–203 (VPA). 2 residues coordinate Mg(2+): Ser-51 and Thr-71.

The protein belongs to the TRAFAC class TrmE-Era-EngA-EngB-Septin-like GTPase superfamily. EngB GTPase family. Mg(2+) is required as a cofactor.

In terms of biological role, necessary for normal cell division and for the maintenance of normal septation. The polypeptide is Probable GTP-binding protein EngB (Methanococcus maripaludis (strain DSM 14266 / JCM 13030 / NBRC 101832 / S2 / LL)).